The sequence spans 441 residues: Glutamate--tRNA ligase 1 (441 aa).

Residues 8–18 (PSPTGHIHVGN) carry the 'HIGH' region motif. Residues 239–243 (ELSKR) carry the 'KMSKS' region motif. K242 is an ATP binding site.

It belongs to the class-I aminoacyl-tRNA synthetase family. Glutamate--tRNA ligase type 1 subfamily. Monomer.

The protein resides in the cytoplasm. It carries out the reaction tRNA(Glu) + L-glutamate + ATP = L-glutamyl-tRNA(Glu) + AMP + diphosphate. Its function is as follows. Catalyzes the attachment of glutamate to tRNA(Glu) in a two-step reaction: glutamate is first activated by ATP to form Glu-AMP and then transferred to the acceptor end of tRNA(Glu). The chain is Glutamate--tRNA ligase 1 from Paracoccus denitrificans (strain Pd 1222).